Consider the following 298-residue polypeptide: MESTLIKGSMVAIITPFKNGKIDEVGYEKLIKREIANGINVIVPVGTTGESATLTHEEHRVCIEIAVDTCKGTDVKVLAGAGSNATHEAIGLAKFAQDHGADAVLSVAPYYNKPTQQGLYLHYKEIANSVEIPVLLYNVPGRTGCDIKADTVIRLFRECKNIIGVKEASGDIDRCVDLLSREPHMTVVSGEDSINYPILANGGKGVISVTANLLPDYVAKLCDYALKGDFVKSREINNELYELNKILFVESNPVPIKAAMYIAGLIETLEYRLPLCEPSKENYKKIEETIKKYKIKGL.

Thr48 serves as a coordination point for pyruvate. The active-site Proton donor/acceptor is Tyr137. Catalysis depends on Lys166, which acts as the Schiff-base intermediate with substrate. Residue Ile207 participates in pyruvate binding.

Belongs to the DapA family. Homotetramer; dimer of dimers.

It localises to the cytoplasm. The enzyme catalyses L-aspartate 4-semialdehyde + pyruvate = (2S,4S)-4-hydroxy-2,3,4,5-tetrahydrodipicolinate + H2O + H(+). Its pathway is amino-acid biosynthesis; L-lysine biosynthesis via DAP pathway; (S)-tetrahydrodipicolinate from L-aspartate: step 3/4. Functionally, catalyzes the condensation of (S)-aspartate-beta-semialdehyde [(S)-ASA] and pyruvate to 4-hydroxy-tetrahydrodipicolinate (HTPA). This chain is 4-hydroxy-tetrahydrodipicolinate synthase, found in Campylobacter hominis (strain ATCC BAA-381 / DSM 21671 / CCUG 45161 / LMG 19568 / NCTC 13146 / CH001A).